A 609-amino-acid polypeptide reads, in one-letter code: Glutamine--fructose-6-phosphate aminotransferase [isomerizing] (609 aa).

The Nucleophile; for GATase activity role is filled by cysteine 2. The Glutamine amidotransferase type-2 domain occupies 2–218 (CGIVGAIAQR…EGDIAEITRR (217 aa)). SIS domains are found at residues 286 to 426 (ADEL…LKGL) and 458 to 599 (LAED…VDQP). The For Fru-6P isomerization activity role is filled by lysine 604.

Homodimer. In pull-down experiments interacts with CedA.

The protein localises to the cytoplasm. The enzyme catalyses D-fructose 6-phosphate + L-glutamine = D-glucosamine 6-phosphate + L-glutamate. Functionally, catalyzes the first step in hexosamine metabolism, converting fructose-6P into glucosamine-6P using glutamine as a nitrogen source. In Escherichia coli (strain K12), this protein is Glutamine--fructose-6-phosphate aminotransferase [isomerizing] (glmS).